Here is a 156-residue protein sequence, read N- to C-terminus: MKCPKCSSTHSRVVDSRHADDANAIRRRRECENCGTRFTTFEHIEVSPLIVVKKDGTREQFLREKILNGLVRSCEKRPVRYQQLEDITNKVEWQLRDSGQTEISSRDIGEHVMNLLMHVDQVSYVRFASVYKEFKDVDQLLASMQGILNDNKRSDL.

Residues 3 to 34 (CPKCSSTHSRVVDSRHADDANAIRRRRECENC) fold into a zinc finger. Positions 49 to 139 (LIVVKKDGTR…VYKEFKDVDQ (91 aa)) constitute an ATP-cone domain.

The protein belongs to the NrdR family. Requires Zn(2+) as cofactor.

Negatively regulates transcription of bacterial ribonucleotide reductase nrd genes and operons by binding to NrdR-boxes. The protein is Transcriptional repressor NrdR of Staphylococcus haemolyticus (strain JCSC1435).